The chain runs to 238 residues: Urease accessory protein UreF (238 aa).

It belongs to the UreF family. As to quaternary structure, ureD, UreF and UreG form a complex that acts as a GTP-hydrolysis-dependent molecular chaperone, activating the urease apoprotein by helping to assemble the nickel containing metallocenter of UreC. The UreE protein probably delivers the nickel.

The protein localises to the cytoplasm. Required for maturation of urease via the functional incorporation of the urease nickel metallocenter. The protein is Urease accessory protein UreF of Delftia acidovorans (strain DSM 14801 / SPH-1).